A 317-amino-acid polypeptide reads, in one-letter code: Lipoyl synthase (317 aa).

Residues 1–21 (MVTVIDTLARPRHPEKANRPE) are disordered. A compositionally biased stretch (basic and acidic residues) spans 12-21 (RHPEKANRPE). [4Fe-4S] cluster-binding residues include C57, C62, C68, C83, C87, C90, and S296. In terms of domain architecture, Radical SAM core spans 69-285 (WEKKHATFMI…ETVAYAKGFL (217 aa)).

Belongs to the radical SAM superfamily. Lipoyl synthase family. It depends on [4Fe-4S] cluster as a cofactor.

It is found in the cytoplasm. It catalyses the reaction [[Fe-S] cluster scaffold protein carrying a second [4Fe-4S](2+) cluster] + N(6)-octanoyl-L-lysyl-[protein] + 2 oxidized [2Fe-2S]-[ferredoxin] + 2 S-adenosyl-L-methionine + 4 H(+) = [[Fe-S] cluster scaffold protein] + N(6)-[(R)-dihydrolipoyl]-L-lysyl-[protein] + 4 Fe(3+) + 2 hydrogen sulfide + 2 5'-deoxyadenosine + 2 L-methionine + 2 reduced [2Fe-2S]-[ferredoxin]. Its pathway is protein modification; protein lipoylation via endogenous pathway; protein N(6)-(lipoyl)lysine from octanoyl-[acyl-carrier-protein]: step 2/2. Its function is as follows. Catalyzes the radical-mediated insertion of two sulfur atoms into the C-6 and C-8 positions of the octanoyl moiety bound to the lipoyl domains of lipoate-dependent enzymes, thereby converting the octanoylated domains into lipoylated derivatives. The chain is Lipoyl synthase from Xanthobacter autotrophicus (strain ATCC BAA-1158 / Py2).